Consider the following 272-residue polypeptide: S-adenosylmethionine decarboxylase proenzyme (272 aa).

Serine 122 functions as the Schiff-base intermediate with substrate; via pyruvic acid in the catalytic mechanism. Serine 122 carries the pyruvic acid (Ser); by autocatalysis modification. Histidine 127 acts as the Proton acceptor; for processing activity in catalysis. The Proton donor; for catalytic activity role is filled by cysteine 150.

The protein belongs to the prokaryotic AdoMetDC family. Type 2 subfamily. Heterooctamer of four alpha and four beta chains arranged as a tetramer of alpha/beta heterodimers. The cofactor is pyruvate. Post-translationally, is synthesized initially as an inactive proenzyme. Formation of the active enzyme involves a self-maturation process in which the active site pyruvoyl group is generated from an internal serine residue via an autocatalytic post-translational modification. Two non-identical subunits are generated from the proenzyme in this reaction, and the pyruvate is formed at the N-terminus of the alpha chain, which is derived from the carboxyl end of the proenzyme. The post-translation cleavage follows an unusual pathway, termed non-hydrolytic serinolysis, in which the side chain hydroxyl group of the serine supplies its oxygen atom to form the C-terminus of the beta chain, while the remainder of the serine residue undergoes an oxidative deamination to produce ammonia and the pyruvoyl group blocking the N-terminus of the alpha chain.

The catalysed reaction is S-adenosyl-L-methionine + H(+) = S-adenosyl 3-(methylsulfanyl)propylamine + CO2. It participates in amine and polyamine biosynthesis; S-adenosylmethioninamine biosynthesis; S-adenosylmethioninamine from S-adenosyl-L-methionine: step 1/1. Catalyzes the decarboxylation of S-adenosylmethionine to S-adenosylmethioninamine (dcAdoMet), the propylamine donor required for the synthesis of the polyamines spermine and spermidine from the diamine putrescine. This is S-adenosylmethionine decarboxylase proenzyme from Clostridium botulinum (strain Alaska E43 / Type E3).